Consider the following 544-residue polypeptide: Chaperonin GroEL (544 aa).

Residues 30-33 (TLGP), Lys51, 87-91 (DGTTT), Gly415, and Asp495 each bind ATP.

Belongs to the chaperonin (HSP60) family. Forms a cylinder of 14 subunits composed of two heptameric rings stacked back-to-back. Interacts with the co-chaperonin GroES.

The protein localises to the cell outer membrane. The enzyme catalyses ATP + H2O + a folded polypeptide = ADP + phosphate + an unfolded polypeptide.. In terms of biological role, together with its co-chaperonin GroES, plays an essential role in assisting protein folding. The GroEL-GroES system forms a nano-cage that allows encapsulation of the non-native substrate proteins and provides a physical environment optimized to promote and accelerate protein folding. In Neisseria gonorrhoeae, this protein is Chaperonin GroEL.